Here is a 148-residue protein sequence, read N- to C-terminus: Snaclec jerdonuxin subunit beta (148 aa).

The N-terminal stretch at 1–23 (MVRFIFVSFGLLVVFLSLSGIGA) is a signal peptide. 3 disulfide bridges follow: Cys-27/Cys-38, Cys-55/Cys-144, and Cys-121/Cys-136. Positions 34-145 (YDEHCYQVFQ…CSSKRYIVCK (112 aa)) constitute a C-type lectin domain.

This sequence belongs to the snaclec family. As to quaternary structure, tetramer of 4 heterodimers of alpha and beta subunits; disulfide-linked. In terms of tissue distribution, expressed by the venom gland.

The protein resides in the secreted. Its function is as follows. Snaclec that strongly induces platelet aggregation, in a dose-dependent manner. The protein is Snaclec jerdonuxin subunit beta of Protobothrops jerdonii (Jerdon's pitviper).